Reading from the N-terminus, the 173-residue chain is Probable glutathione peroxidase 5 (173 aa).

Gly2 carries N-myristoyl glycine lipidation. Cys46 is an active-site residue.

Belongs to the glutathione peroxidase family. As to expression, ubiquitous.

It is found in the cell membrane. The catalysed reaction is 2 glutathione + H2O2 = glutathione disulfide + 2 H2O. Its function is as follows. May constitute a glutathione peroxidase-like protective system against oxidative stresses. The polypeptide is Probable glutathione peroxidase 5 (GPX5) (Arabidopsis thaliana (Mouse-ear cress)).